Here is a 322-residue protein sequence, read N- to C-terminus: Fructose-1,6-bisphosphatase class 1 (322 aa).

Mg(2+)-binding residues include glutamate 84, aspartate 103, leucine 105, and aspartate 106. Residues 106 to 109 (DGSS), asparagine 198, and lysine 264 each bind substrate. A Mg(2+)-binding site is contributed by glutamate 270.

This sequence belongs to the FBPase class 1 family. In terms of assembly, homotetramer. The cofactor is Mg(2+).

It is found in the cytoplasm. It carries out the reaction beta-D-fructose 1,6-bisphosphate + H2O = beta-D-fructose 6-phosphate + phosphate. Its pathway is carbohydrate biosynthesis; gluconeogenesis. This is Fructose-1,6-bisphosphatase class 1 from Colwellia psychrerythraea (strain 34H / ATCC BAA-681) (Vibrio psychroerythus).